The following is a 32-amino-acid chain: Cytochrome b6-f complex subunit 7 (32 aa).

A helical membrane pass occupies residues 9 to 27 (AAVFWVLIPVGLLGGAILL).

The protein belongs to the PetM family. The 4 large subunits of the cytochrome b6-f complex are cytochrome b6, subunit IV (17 kDa polypeptide, PetD), cytochrome f and the Rieske protein, while the 4 small subunits are PetG, PetL, PetM and PetN. The complex functions as a dimer.

It localises to the cellular thylakoid membrane. Component of the cytochrome b6-f complex, which mediates electron transfer between photosystem II (PSII) and photosystem I (PSI), cyclic electron flow around PSI, and state transitions. This is Cytochrome b6-f complex subunit 7 from Prochlorococcus marinus (strain MIT 9211).